Here is a 344-residue protein sequence, read N- to C-terminus: Pyruvate dehydrogenase E1 component subunit alpha (344 aa).

The pyruvate site is built by H55, Y81, R82, A130, I132, D168, G169, and N197. Positions 81, 82, 130, 132, 168, 169, 197, and 266 each coordinate thiamine diphosphate. D168 is a binding site for Mg(2+). N197 lines the Mg(2+) pocket.

Heterodimer of an alpha and a beta chain. The cofactor is thiamine diphosphate. Mg(2+) serves as cofactor.

It localises to the plastid. The protein localises to the chloroplast. The enzyme catalyses N(6)-[(R)-lipoyl]-L-lysyl-[protein] + pyruvate + H(+) = N(6)-[(R)-S(8)-acetyldihydrolipoyl]-L-lysyl-[protein] + CO2. The pyruvate dehydrogenase complex catalyzes the overall conversion of pyruvate to acetyl-CoA and CO(2). It contains multiple copies of three enzymatic components: pyruvate dehydrogenase (E1), dihydrolipoamide acetyltransferase (E2) and lipoamide dehydrogenase (E3). The chain is Pyruvate dehydrogenase E1 component subunit alpha (pdhA) from Porphyra purpurea (Red seaweed).